The chain runs to 203 residues: Chromophore lyase CpcT/CpeT 3 (203 aa).

The protein belongs to the CpcT/CpeT biliprotein lyase family.

Functionally, covalently attaches a chromophore to Cys residue(s) of phycobiliproteins. In Gloeobacter violaceus (strain ATCC 29082 / PCC 7421), this protein is Chromophore lyase CpcT/CpeT 3.